Reading from the N-terminus, the 464-residue chain is L-cysteine:1D-myo-inositol 2-amino-2-deoxy-alpha-D-glucopyranoside ligase (464 aa).

Cys67 lines the Zn(2+) pocket. L-cysteinyl-5'-AMP-binding positions include 67 to 70, Thr82, and 105 to 107; these read CGIT and NVT. A 'HIGH' region motif is present at residues 69-79; the sequence is ITPYDATHLGH. The 'ERGGDP' region motif lies at 207–212; the sequence is ERGGDP. Trp247 is an L-cysteinyl-5'-AMP binding site. Cys251 contributes to the Zn(2+) binding site. 269-271 serves as a coordination point for L-cysteinyl-5'-AMP; the sequence is GTD. His276 provides a ligand contact to Zn(2+). Val303 contributes to the L-cysteinyl-5'-AMP binding site. Residues 309–313 carry the 'KMSKS' region motif; sequence KMSKS. The disordered stretch occupies residues 410-435; the sequence is AGGSAGAGPDPTHQGGPVRGSGGDVP.

This sequence belongs to the class-I aminoacyl-tRNA synthetase family. MshC subfamily. In terms of assembly, monomer. Zn(2+) is required as a cofactor.

It catalyses the reaction 1D-myo-inositol 2-amino-2-deoxy-alpha-D-glucopyranoside + L-cysteine + ATP = 1D-myo-inositol 2-(L-cysteinylamino)-2-deoxy-alpha-D-glucopyranoside + AMP + diphosphate + H(+). Its function is as follows. Catalyzes the ATP-dependent condensation of GlcN-Ins and L-cysteine to form L-Cys-GlcN-Ins. This is L-cysteine:1D-myo-inositol 2-amino-2-deoxy-alpha-D-glucopyranoside ligase from Frankia casuarinae (strain DSM 45818 / CECT 9043 / HFP020203 / CcI3).